Reading from the N-terminus, the 207-residue chain is Octanoyltransferase (207 aa).

The BPL/LPL catalytic domain occupies 27 to 203; that stretch reads ADTEDELWVV…HLETQLTPKA (177 aa). Substrate-binding positions include 66-73, 133-135, and 146-148; these read RGGQITYH, SLG, and GLA. Cys-164 acts as the Acyl-thioester intermediate in catalysis.

Belongs to the LipB family.

It localises to the cytoplasm. The catalysed reaction is octanoyl-[ACP] + L-lysyl-[protein] = N(6)-octanoyl-L-lysyl-[protein] + holo-[ACP] + H(+). It participates in protein modification; protein lipoylation via endogenous pathway; protein N(6)-(lipoyl)lysine from octanoyl-[acyl-carrier-protein]: step 1/2. In terms of biological role, catalyzes the transfer of endogenously produced octanoic acid from octanoyl-acyl-carrier-protein onto the lipoyl domains of lipoate-dependent enzymes. Lipoyl-ACP can also act as a substrate although octanoyl-ACP is likely to be the physiological substrate. The sequence is that of Octanoyltransferase from Neisseria gonorrhoeae (strain ATCC 700825 / FA 1090).